Consider the following 189-residue polypeptide: Glucose-6-phosphate isomerase (189 aa).

Fe cation contacts are provided by His-88, His-90, Glu-97, and His-136.

Belongs to the archaeal-type GPI family. Homodimer.

The protein localises to the cytoplasm. It carries out the reaction alpha-D-glucose 6-phosphate = beta-D-fructose 6-phosphate. It participates in carbohydrate degradation; glycolysis; D-glyceraldehyde 3-phosphate and glycerone phosphate from D-glucose: step 2/4. In Thermococcus gammatolerans (strain DSM 15229 / JCM 11827 / EJ3), this protein is Glucose-6-phosphate isomerase.